Here is a 607-residue protein sequence, read N- to C-terminus: Zinc finger protein 750 (607 aa).

The segment at 25-51 (YQCFQCPFTCNIKSHLFNHMKYNLCKN) adopts a CCHC-type zinc-finger fold. Residues cysteine 27, cysteine 30, histidine 43, and cysteine 49 each contribute to the Zn(2+) site. Over residues 60-78 (MEQTGKASRASQHSPAFSH) the composition is skewed to polar residues. 4 disordered regions span residues 60-133 (MEQT…DKSE), 318-467 (RAVQ…SSQE), 482-511 (QALP…QDLE), and 575-607 (GQKR…SQNC). Basic and acidic residues-rich tracts occupy residues 79 to 133 (NSKE…DKSE) and 318 to 334 (RAVQ…RESP). Positions 369 to 380 (HSGSQSHIISGS) are enriched in low complexity. Positions 421–432 (DKEEDEETEEEI) are enriched in acidic residues. Residues 452-462 (HYPDRELHYDS) show a composition bias toward basic and acidic residues. A compositionally biased stretch (polar residues) spans 496 to 507 (ISNAEVSTTESP). Over residues 579-592 (ANNRPLRHTNKRAK) the composition is skewed to basic residues.

Its subcellular location is the nucleus. Functionally, transcription factor involved in epidermis differentiation. This Danio rerio (Zebrafish) protein is Zinc finger protein 750 (znf750).